A 429-amino-acid polypeptide reads, in one-letter code: Neuronal pentraxin-2 (429 aa).

A signal peptide spans 1–14 (MLALLTVGVALAVA). Residues Asn-146 and Asn-187 are each glycosylated (N-linked (GlcNAc...) asparagine). In terms of domain architecture, Pentraxin (PTX) spans 221–422 (DAFKVSLPLR…GASKWPVETC (202 aa)). A disulfide bridge links Cys-251 with Cys-311. Positions 275, 353, 354, 355, and 365 each coordinate Ca(2+). Asn-391 is a glycosylation site (N-linked (GlcNAc...) asparagine).

In terms of assembly, homooligomer or heterooligomer (probably pentamer) with neuronal pentraxin receptor (NPTXR). It depends on Ca(2+) as a cofactor.

The protein localises to the secreted. Its function is as follows. Likely to play role in the modification of cellular properties that underlie long-term plasticity. Binds to agar matrix in a calcium-dependent manner. The chain is Neuronal pentraxin-2 (Nptx2) from Mus musculus (Mouse).